Here is a 61-residue protein sequence, read N- to C-terminus: Putative antitoxin APE_0472b.1 (61 aa).

This sequence belongs to the UPF0165 family.

In terms of biological role, possibly the antitoxin component of a type II toxin-antitoxin (TA) system. This is Putative antitoxin APE_0472b.1 from Aeropyrum pernix (strain ATCC 700893 / DSM 11879 / JCM 9820 / NBRC 100138 / K1).